The sequence spans 97 residues: DNA-binding protein NEQ150 (97 aa).

This sequence belongs to the PDCD5 family.

The chain is DNA-binding protein NEQ150 from Nanoarchaeum equitans (strain Kin4-M).